A 49-amino-acid polypeptide reads, in one-letter code: Large ribosomal subunit protein bL33A (49 aa).

This sequence belongs to the bacterial ribosomal protein bL33 family.

The sequence is that of Large ribosomal subunit protein bL33A from Latilactobacillus sakei subsp. sakei (strain 23K) (Lactobacillus sakei subsp. sakei).